We begin with the raw amino-acid sequence, 155 residues long: Deoxyuridine 5'-triphosphate nucleotidohydrolase (155 aa).

Substrate is bound by residues 74–76 (RSG), Asn-87, and 91–93 (TID).

It belongs to the dUTPase family. Mg(2+) serves as cofactor.

The catalysed reaction is dUTP + H2O = dUMP + diphosphate + H(+). It participates in pyrimidine metabolism; dUMP biosynthesis; dUMP from dCTP (dUTP route): step 2/2. Its function is as follows. This enzyme is involved in nucleotide metabolism: it produces dUMP, the immediate precursor of thymidine nucleotides and it decreases the intracellular concentration of dUTP so that uracil cannot be incorporated into DNA. The polypeptide is Deoxyuridine 5'-triphosphate nucleotidohydrolase (Cereibacter sphaeroides (strain ATCC 17023 / DSM 158 / JCM 6121 / CCUG 31486 / LMG 2827 / NBRC 12203 / NCIMB 8253 / ATH 2.4.1.) (Rhodobacter sphaeroides)).